We begin with the raw amino-acid sequence, 102 residues long: Large ribosomal subunit protein bL21 (102 aa).

It belongs to the bacterial ribosomal protein bL21 family. As to quaternary structure, part of the 50S ribosomal subunit. Contacts protein L20.

This protein binds to 23S rRNA in the presence of protein L20. The sequence is that of Large ribosomal subunit protein bL21 from Campylobacter hominis (strain ATCC BAA-381 / DSM 21671 / CCUG 45161 / LMG 19568 / NCTC 13146 / CH001A).